Consider the following 411-residue polypeptide: Glutamyl-tRNA reductase (411 aa).

Residues 49–52, serine 99, 104–106, and glutamine 110 contribute to the substrate site; these read TCNR and ENE. Cysteine 50 functions as the Nucleophile in the catalytic mechanism. 179–184 provides a ligand contact to NADP(+); that stretch reads GAGEAG.

The protein belongs to the glutamyl-tRNA reductase family. As to quaternary structure, homodimer.

It catalyses the reaction (S)-4-amino-5-oxopentanoate + tRNA(Glu) + NADP(+) = L-glutamyl-tRNA(Glu) + NADPH + H(+). It functions in the pathway porphyrin-containing compound metabolism; protoporphyrin-IX biosynthesis; 5-aminolevulinate from L-glutamyl-tRNA(Glu): step 1/2. In terms of biological role, catalyzes the NADPH-dependent reduction of glutamyl-tRNA(Glu) to glutamate 1-semialdehyde (GSA). The polypeptide is Glutamyl-tRNA reductase (Hyperthermus butylicus (strain DSM 5456 / JCM 9403 / PLM1-5)).